An 89-amino-acid chain; its full sequence is Three-finger toxin 3 (89 aa).

Residues 1 to 16 (MKTLLLILGVVAFVYL) form the signal peptide. 4 cysteine pairs are disulfide-bonded: Cys24/Cys47, Cys40/Cys66, Cys70/Cys81, and Cys82/Cys87.

The protein belongs to the three-finger toxin family. Ancestral subfamily. In terms of tissue distribution, expressed by the venom gland.

Its subcellular location is the secreted. This is Three-finger toxin 3 from Sistrurus catenatus edwardsii (Desert massasauga).